A 430-amino-acid chain; its full sequence is Enolase (430 aa).

Gln163 lines the (2R)-2-phosphoglycerate pocket. Glu205 acts as the Proton donor in catalysis. Asp242, Glu287, and Asp314 together coordinate Mg(2+). Residues Lys339, Arg368, Ser369, and Lys390 each coordinate (2R)-2-phosphoglycerate. Lys339 acts as the Proton acceptor in catalysis.

Belongs to the enolase family. Requires Mg(2+) as cofactor.

It localises to the cytoplasm. Its subcellular location is the secreted. It is found in the cell surface. It catalyses the reaction (2R)-2-phosphoglycerate = phosphoenolpyruvate + H2O. It participates in carbohydrate degradation; glycolysis; pyruvate from D-glyceraldehyde 3-phosphate: step 4/5. Functionally, catalyzes the reversible conversion of 2-phosphoglycerate (2-PG) into phosphoenolpyruvate (PEP). It is essential for the degradation of carbohydrates via glycolysis. The protein is Enolase of Clostridioides difficile (strain 630) (Peptoclostridium difficile).